A 224-amino-acid polypeptide reads, in one-letter code: Small ribosomal subunit protein uS3 (224 aa).

The KH type-2 domain maps to 39–107; the sequence is VRKYIQNALA…PVHINIEEIR (69 aa).

Belongs to the universal ribosomal protein uS3 family. As to quaternary structure, part of the 30S ribosomal subunit. Forms a tight complex with proteins S10 and S14.

Functionally, binds the lower part of the 30S subunit head. Binds mRNA in the 70S ribosome, positioning it for translation. The chain is Small ribosomal subunit protein uS3 from Saccharophagus degradans (strain 2-40 / ATCC 43961 / DSM 17024).